Consider the following 187-residue polypeptide: Cytochrome c oxidase assembly protein CtaG (187 aa).

At 1–9 (MSKKSNKNL) the chain is on the cytoplasmic side. Residues 10–30 (AFSLLGLIISMVLLSFASVPI) form a helical; Signal-anchor for type II membrane protein membrane-spanning segment. The Periplasmic segment spans residues 31 to 187 (YNLFCKVTGY…IASLRGNTKY (157 aa)).

Belongs to the COX11/CtaG family.

It is found in the cell inner membrane. Its function is as follows. Exerts its effect at some terminal stage of cytochrome c oxidase synthesis, probably by being involved in the insertion of the copper B into subunit I. This Rickettsia felis (strain ATCC VR-1525 / URRWXCal2) (Rickettsia azadi) protein is Cytochrome c oxidase assembly protein CtaG.